We begin with the raw amino-acid sequence, 437 residues long: MKWLHLLSVVACVADEVYAFPSHLHGAVGHLTASRLSSVVDEAVRSAHEKRLLFDAGNEPIDVTGKHEFIPPNFEKGDQRGPCPGLNALANHGYIKRNGVTNLVETIGAINKVYGMGIDLATILTTMGVVFVGNPLSLNPGFSIGSTPKGNDNILGNLVGLLGKPRGLVGSHNIIEGDSSNTRADLYVTGDASTMAMDQFESFYDMASDEGTYDFDTFAERAKIRFHETIETNPDFYYGPFTGMIVRNAGYFFACRMLSNHTKGSHEDIMDQATLRSFFAVQKEGDKLTYKRGWERIPTNWYRRSVDYGLIDVNLDVISLITKYPELGSIGGNMGEVNSYAGVDISDITGGVLNLTKLLEGNNLLCFVFEVVKTVSPNSLSGLFSIVVPPLKLITDALGTALLDLSCPALKDLQVGGESFSKGIQKKFPGAKINASL.

The signal sequence occupies residues 1–19 (MKWLHLLSVVACVADEVYA). Residue Cys83 coordinates heme.

This sequence belongs to the chloroperoxidase family. Heme b is required as a cofactor.

It functions in the pathway secondary metabolite biosynthesis. Functionally, aromatic peroxidase; part of the fragmented gene cluster that mediates the biosynthesis of fusarochromene, a tryptophan-derived metabolite closely related to a group of mycotoxins including fusarochromanone. The role of fscJ within the pathway has not been identified yet. The first step of the pathway is the epimerization of L-tryptophan to D-tryptophan in the presence of the NRPS-like tryptophan epimerase fscC. D-tryptophan is subsequently hydroxylated by the tryptophan 6-hydroxylase fscE to yield 6-hydroxytryptophan. The pyrrole ring undergoes cleavaged by the tryptophan 2,3-dioxygenase fscD and is finally converted to 4-hydroxykyrunenine by the hydrolase fscH. The NRPS-like oxidoreductase fscA reduces the carboxyl group to primary alcohol and the DMATS-type prenyltransferase fscG performs prenylation, followed by the formation of a chromene ring catalyzed by the oxidoreductase fscI, which leads to desacetylfusarochromene. Epoxidation by fscF and rearrangement reactions of chromene double bonds convert compound desacetylfusarochromene to fusarochromanones. Although specific acetyltransferases were not found near the fsc gene cluster, several predicted enzymes containing the N-acetyltransferase superfamily domain are present in the genome of F.equiseti. These predicted enzymes may have the potential to convert desacetylfusarochromene to fusarochromene. This chain is Aromatic peroxidase fscJ, found in Fusarium equiseti (Fusarium scirpi).